The primary structure comprises 372 residues: UDP-2-acetamido-2,6-beta-L-arabino-hexul-4-ose reductase (372 aa).

NAD(+) is bound by residues 7 to 30 (GANG…EVVP), Leu53, Tyr103, and Lys107. The active-site Proton acceptor is Tyr103. Substrate-binding positions include Asn132 and 279-282 (HPGV).

This sequence belongs to the NAD(P)-dependent epimerase/dehydratase family. As to quaternary structure, homodimer.

The enzyme catalyses UDP-2-acetamido-2,6-dideoxy-beta-L-arabino-hex-4-ulose + NADH + H(+) = UDP-2-acetamido-2,6-dideoxy-beta-L-talose + NAD(+). It carries out the reaction UDP-2-acetamido-2,6-dideoxy-beta-L-arabino-hex-4-ulose + NADPH + H(+) = UDP-2-acetamido-2,6-dideoxy-beta-L-talose + NADP(+). It participates in bacterial outer membrane biogenesis; LPS O-antigen biosynthesis. Functionally, bifunctional enzyme that mediates C-3 epimerization of the second intermediate followed by reduction at C-4 during serogroup O11 O-antigen biosynthesis, thus catalyzing the conversion of UDP-N-acetyl-D-glucosamine to precursors for the biosynthesis of O antigen. This is UDP-2-acetamido-2,6-beta-L-arabino-hexul-4-ose reductase from Pseudomonas aeruginosa (strain ATCC 29260 / BCRC 12902 / CIP 102967 / NCIMB 11965 / PA103).